A 1310-amino-acid chain; its full sequence is Cadherin-related family member 2 (1310 aa).

The N-terminal stretch at 1-20 is a signal peptide; that stretch reads MAQLWLSCFLLPALVVSVAA. The Extracellular segment spans residues 21-1154; it reads NVAPKFLANM…ESDLSKQLIS (1134 aa). 3 Cadherin domains span residues 27–124, 125–241, and 242–353; these read LANM…APVF, QNTA…DPQF, and VREF…KPEF. N-linked (GlcNAc...) asparagine glycans are attached at residues Asn29, Asn134, Asn182, Asn188, Asn195, Asn300, Asn355, Asn371, Asn401, Asn460, Asn565, Asn600, Asn616, Asn632, Asn680, Asn696, Asn701, Asn775, Asn821, Asn871, Asn877, Asn911, Asn932, and Asn1107. Cadherin domains are found at residues 368-480, 481-586, 586-695, 696-808, 810-928, and 930-1058; these read AQVN…RPTF, PQSL…APVV, VSGS…LPIF, NQSS…PPTL, VASL…APYF, and PENK…TPKE. A helical membrane pass occupies residues 1155 to 1175; sequence VIIGLGVALLLVLVIMTMAFV. The Cytoplasmic segment spans residues 1176-1310; it reads CVRKSYNRKL…TNAGLDTTDL (135 aa). Positions 1180–1310 are mediates interaction with USH1C and MYO7B and is required for proper localization to microvilli tips and function in microvilli organization; sequence SYNRKLQAMK…TNAGLDTTDL (131 aa). At Ser1248 the chain carries Phosphoserine. The span at 1259-1268 shows a compositional bias: basic and acidic residues; that stretch reads NSQEIKEHRP. Residues 1259–1310 are disordered; it reads NSQEIKEHRPPHTPPEPDPEPLSVVLLGRQAGASGQLEGPSYTNAGLDTTDL. Ser1299 bears the Phosphoserine mark. The segment covering 1299-1310 has biased composition (polar residues); sequence SYTNAGLDTTDL.

Part of the IMAC/intermicrovillar adhesion complex/intermicrovillar tip-link complex composed of ANKS4B, MYO7B, USH1C, CDHR2 and CDHR5. Interacts with MAST2. Interacts (via cytoplasmic domain) with USH1C and MYO7B; required for proper localization of CDHR2 to microvilli tips and its function in brush border differentiation. As to expression, highly expressed in liver, kidney and colon. Moderately expressed in small intestine. Down-regulated in a number of liver and colon cancers. Expressed in duodenum with higher expression in enterocytes along the villus axis and lower expression in crypts (at protein level).

It is found in the apical cell membrane. The protein resides in the cell projection. It localises to the microvillus membrane. The protein localises to the cell junction. Functionally, intermicrovillar adhesion molecule that forms, via its extracellular domain, calcium-dependent heterophilic complexes with CDHR5 on adjacent microvilli. Thereby, controls the packing of microvilli at the apical membrane of epithelial cells. Through its cytoplasmic domain, interacts with microvillus cytoplasmic proteins to form the intermicrovillar adhesion complex/IMAC. This complex plays a central role in microvilli and epithelial brush border differentiation. May also play a role in cell-cell adhesion and contact inhibition in epithelial cells. The protein is Cadherin-related family member 2 of Homo sapiens (Human).